Reading from the N-terminus, the 403-residue chain is Putative gustatory receptor 98b (403 aa).

The Cytoplasmic portion of the chain corresponds to 1–11; it reads MVAQKSRLLAR. A helical transmembrane segment spans residues 12–32; that stretch reads AFPYLDIFSVFALTPPPQSFG. At 33–48 the chain is on the extracellular side; that stretch reads HTPHRRLRWYLMTGYV. The chain crosses the membrane as a helical span at residues 49–69; it reads FYATAILATVFIVSYFNIIAI. The Cytoplasmic portion of the chain corresponds to 70 to 83; sequence DEEVLEYNVSDFTR. The chain crosses the membrane as a helical span at residues 84-104; sequence VMGNIQKSLYSIMAIANHLNM. The Extracellular segment spans residues 105 to 144; the sequence is LINYRRLGGIYKDIADLEMDMDEASQCFGGQRQRFSFRFR. The chain crosses the membrane as a helical span at residues 145–165; the sequence is MALCVGVWMILMVGSMPRLTM. Residues 166 to 191 are Cytoplasmic-facing; it reads TAMGPFVSTLLKILTEFVMIMQQLKS. The chain crosses the membrane as a helical span at residues 192-212; sequence LEYCVFVLIIYELVLRLRRTL. Residues 213–259 lie on the Extracellular side of the membrane; it reads SQLQEEFQDCEQQDMLQALCVALKRNQLLLGRIWRLEGDVGSYFTPT. A helical membrane pass occupies residues 260–280; sequence MLLLFLYNGLTILHMVNWAYI. Residues 281 to 365 are Cytoplasmic-facing; that stretch reads NKFLYDSCCQ…LRFTCGGLFD (85 aa). Residues 366–386 form a helical membrane-spanning segment; it reads INLKYFGGLLVTIFGYIIILI. At 387-403 the chain is on the extracellular side; it reads QFKVQAIAANRYKKVVN.

The protein belongs to the insect chemoreceptor superfamily. Gustatory receptor (GR) family. Gr2a subfamily.

It is found in the cell membrane. Its function is as follows. Probable gustatory receptor which mediates acceptance or avoidance behavior, depending on its substrates. In Drosophila melanogaster (Fruit fly), this protein is Putative gustatory receptor 98b (Gr98b).